The primary structure comprises 89 residues: Small ribosomal subunit protein uS15 (89 aa).

It belongs to the universal ribosomal protein uS15 family. In terms of assembly, part of the 30S ribosomal subunit. Forms a bridge to the 50S subunit in the 70S ribosome, contacting the 23S rRNA.

In terms of biological role, one of the primary rRNA binding proteins, it binds directly to 16S rRNA where it helps nucleate assembly of the platform of the 30S subunit by binding and bridging several RNA helices of the 16S rRNA. Its function is as follows. Forms an intersubunit bridge (bridge B4) with the 23S rRNA of the 50S subunit in the ribosome. The protein is Small ribosomal subunit protein uS15 of Chlorobium phaeobacteroides (strain BS1).